Consider the following 110-residue polypeptide: UPF0060 membrane protein Bcep1808_1236 (110 aa).

Helical transmembrane passes span 9–29, 34–54, and 66–86; these read ALFA…WLVL, PVWL…LLTL, and YGGV…GVAL.

Belongs to the UPF0060 family.

It localises to the cell inner membrane. This chain is UPF0060 membrane protein Bcep1808_1236, found in Burkholderia vietnamiensis (strain G4 / LMG 22486) (Burkholderia cepacia (strain R1808)).